Reading from the N-terminus, the 84-residue chain is Cell division topological specificity factor (84 aa).

Belongs to the MinE family.

In terms of biological role, prevents the cell division inhibition by proteins MinC and MinD at internal division sites while permitting inhibition at polar sites. This ensures cell division at the proper site by restricting the formation of a division septum at the midpoint of the long axis of the cell. This is Cell division topological specificity factor from Burkholderia cenocepacia (strain ATCC BAA-245 / DSM 16553 / LMG 16656 / NCTC 13227 / J2315 / CF5610) (Burkholderia cepacia (strain J2315)).